The primary structure comprises 276 residues: Homeobox-leucine zipper protein HOX22 (276 aa).

A DNA-binding region (homeobox) is located at residues 70–130; that stretch reads AGERKRRFTE…NKRARWRSKQ (61 aa). The leucine-zipper stretch occupies residues 129-173; that stretch reads KQLEHDYAALRSKYDALHSRVESLKQEKLALTVQLHELRERLRER. Residues 170–212 are disordered; that stretch reads LREREERSGNGGAATTAASSSSCNGSGSEEVDDDDDKRNAAAG. A compositionally biased stretch (low complexity) spans 182-197; it reads AATTAASSSSCNGSGS.

The protein belongs to the HD-ZIP homeobox family. Class I subfamily. Expressed in seedlings, roots, stems, leaf sheaths and blades and panicles.

It localises to the nucleus. Probable transcription factor. This Oryza sativa subsp. japonica (Rice) protein is Homeobox-leucine zipper protein HOX22 (HOX22).